The chain runs to 182 residues: Transcription termination/antitermination protein NusG (182 aa).

The KOW domain maps to Val-131–Val-163.

The protein belongs to the NusG family.

Functionally, participates in transcription elongation, termination and antitermination. This Staphylococcus carnosus (strain TM300) protein is Transcription termination/antitermination protein NusG.